Reading from the N-terminus, the 286-residue chain is Pyridoxal kinase PdxY (286 aa).

Ser8 lines the substrate pocket. Asp110 and Glu147 together coordinate ATP. Asp223 contacts substrate.

It belongs to the pyridoxine kinase family. PdxY subfamily. As to quaternary structure, homodimer. The cofactor is Mg(2+).

The catalysed reaction is pyridoxal + ATP = pyridoxal 5'-phosphate + ADP + H(+). It participates in cofactor metabolism; pyridoxal 5'-phosphate salvage; pyridoxal 5'-phosphate from pyridoxal: step 1/1. Its function is as follows. Pyridoxal kinase involved in the salvage pathway of pyridoxal 5'-phosphate (PLP). Catalyzes the phosphorylation of pyridoxal to PLP. In Granulibacter bethesdensis (strain ATCC BAA-1260 / CGDNIH1), this protein is Pyridoxal kinase PdxY.